The primary structure comprises 303 residues: UPF0282 protein MM_2966 (303 aa).

Belongs to the UPF0282 family.

This Methanosarcina mazei (strain ATCC BAA-159 / DSM 3647 / Goe1 / Go1 / JCM 11833 / OCM 88) (Methanosarcina frisia) protein is UPF0282 protein MM_2966.